We begin with the raw amino-acid sequence, 672 residues long: Inner kinetochore subunit mis6 (672 aa).

This sequence belongs to the CENP-I/CTF3 family. Component of the inner kinetochore constitutive centromere-associated network (CCAN) (also known as central kinetochore Sim4 complex in fission yeast), which is composed of at least cnl2, cnp3, cnp20, fta1, fta2, fta3, fta4, fta6, fta7, mal2, mhf1, mhf2, mis6, mis15, mis17, sim4 and wip1. Interacts with cnp1, sim4, mis15 and mis17.

Its subcellular location is the nucleus. The protein localises to the chromosome. It is found in the centromere. Its function is as follows. Component of the kinetochore, a multiprotein complex that assembles on centromeric DNA and attaches chromosomes to spindle microtubules, mediating chromosome segregation and sister chromatid segregation during meiosis and mitosis. Component of the inner kinetochore constitutive centromere-associated network (CCAN), which serves as a structural platform for outer kinetochore assembly. Required for the localization of cnp1 to the centromere. In Schizosaccharomyces pombe (strain 972 / ATCC 24843) (Fission yeast), this protein is Inner kinetochore subunit mis6 (mis6).